Reading from the N-terminus, the 422-residue chain is Vitellogenin-2 (422 aa).

The N-terminal stretch at 1 to 20 is a signal peptide; that stretch reads MNPLTIFCLVAVLLSAATAH. Disordered regions lie at residues 161–191 and 399–422; these read QGEQ…KPNG and FGKS…GRPN. Residues 180-189 are compositionally biased toward polar residues; sequence NRPNGQQPKP.

The protein belongs to the AB hydrolase superfamily. Lipase family. Synthesized in the fat body and ovarian follicle cells and accumulate in the oocyte.

The protein localises to the secreted. Its function is as follows. Vitellogenin is the major yolk protein of eggs where it is used as a food source during embryogenesis. The polypeptide is Vitellogenin-2 (VG2-delta) (Ceratitis capitata (Mediterranean fruit fly)).